Consider the following 392-residue polypeptide: O-phospho-L-seryl-tRNA:Cys-tRNA synthase (392 aa).

Pyridoxal 5'-phosphate-binding positions include A85–R86, N190, and S213–H215. N6-(pyridoxal phosphate)lysine is present on K216.

It belongs to the SepCysS family. Homodimer. Interacts with SepRS. The cofactor is pyridoxal 5'-phosphate.

It catalyses the reaction O-phospho-L-seryl-tRNA(Cys) + hydrogen sulfide + H(+) = L-cysteinyl-tRNA(Cys) + phosphate. Converts O-phospho-L-seryl-tRNA(Cys) (Sep-tRNA(Cys)) to L-cysteinyl-tRNA(Cys) (Cys-tRNA(Cys)). The chain is O-phospho-L-seryl-tRNA:Cys-tRNA synthase from Methanoculleus marisnigri (strain ATCC 35101 / DSM 1498 / JR1).